We begin with the raw amino-acid sequence, 88 residues long: DNA-directed RNA polymerase subunit omega (88 aa).

Belongs to the RNA polymerase subunit omega family. In terms of assembly, the RNAP catalytic core consists of 2 alpha, 1 beta, 1 beta' and 1 omega subunit. When a sigma factor is associated with the core the holoenzyme is formed, which can initiate transcription.

The enzyme catalyses RNA(n) + a ribonucleoside 5'-triphosphate = RNA(n+1) + diphosphate. Its function is as follows. Promotes RNA polymerase assembly. Latches the N- and C-terminal regions of the beta' subunit thereby facilitating its interaction with the beta and alpha subunits. This Salinispora tropica (strain ATCC BAA-916 / DSM 44818 / JCM 13857 / NBRC 105044 / CNB-440) protein is DNA-directed RNA polymerase subunit omega.